An 876-amino-acid polypeptide reads, in one-letter code: DDB1- and CUL4-associated factor 6 (876 aa).

5 WD repeats span residues valine 49–threonine 88, glycine 92–arginine 133, cysteine 139–lysine 179, asparagine 189–threonine 229, and asparagine 251–leucine 290. Basic and acidic residues-rich tracts occupy residues arginine 288 to arginine 303 and leucine 312 to glutamate 334. Disordered stretches follow at residues arginine 288–serine 340, glutamate 355–asparagine 391, leucine 408–threonine 485, tryptophan 498–leucine 645, and glutamate 658–aspartate 691. Phosphoserine is present on serine 336. Polar residues-rich tracts occupy residues threonine 375–asparagine 391 and glutamine 409–alanine 422. The span at histidine 456–serine 466 shows a compositional bias: basic and acidic residues. Residues serine 499 to serine 510 show a composition bias toward low complexity. A compositionally biased stretch (basic and acidic residues) spans serine 534–glutamate 544. Polar residues-rich tracts occupy residues glutamate 550–leucine 562, aspartate 571–serine 584, glutamate 603–histidine 613, and proline 621–leucine 645. Serine 665 is subject to Phosphoserine. Residue threonine 670 is modified to Phosphothreonine. Phosphoserine is present on serine 673. Residues arginine 692 to arginine 721 form the IQ domain. WD repeat units follow at residues asparagine 734–leucine 772 and alanine 775–asparagine 814. Serine 863 and serine 866 each carry phosphoserine.

In terms of assembly, interacts with the nuclear receptors NR3C1 and AR in the presence of ligand. Interacts with DDB1, CUL4A and CUL4B.

The protein localises to the nucleus. It functions in the pathway protein modification; protein ubiquitination. Functionally, ligand-dependent coactivator of nuclear receptors. Enhance transcriptional activity of the nuclear receptors NR3C1 and AR. May function as a substrate receptor for CUL4-DDB1 E3 ubiquitin-protein ligase complex. In Mus musculus (Mouse), this protein is DDB1- and CUL4-associated factor 6 (Dcaf6).